The chain runs to 666 residues: Probable potassium transport system protein Kup (666 aa).

12 helical membrane passes run 16–36, 58–78, 99–119, 141–161, 167–187, 221–241, 253–273, 292–312, 343–363, 373–393, 402–422, and 424–444; these read GFII…LYTM, ISLI…LVAL, TPWL…DGAL, IFQN…LLFA, TGVI…FLGI, IFIL…YSDL, WPFV…WILA, FTMH…QALI, TYIP…VLLF, YGLA…FFLI, VLLM…ASAV, and FMHG…IMTI.

Belongs to the HAK/KUP transporter (TC 2.A.72) family.

It localises to the cell membrane. The enzyme catalyses K(+)(in) + H(+)(in) = K(+)(out) + H(+)(out). Functionally, transport of potassium into the cell. Likely operates as a K(+):H(+) symporter. This Streptococcus agalactiae serotype V (strain ATCC BAA-611 / 2603 V/R) protein is Probable potassium transport system protein Kup.